The following is a 433-amino-acid chain: Divalent metal cation transporter MntH (433 aa).

The next 11 membrane-spanning stretches (helical) occupy residues 32–52 (LIFA…GNFA), 62–82 (GYDL…FQGL), 101–121 (TLPP…AMAT), 131–151 (IGIA…TGIV), 168–188 (LVIG…LLIV), 209–229 (ALTI…LFLH), 256–276 (VLAA…MAAG), 296–316 (SPLL…ASGV), 345–365 (ALTM…TRAL), 366–386 (VLSQ…LLWF), and 401–421 (ITAI…VILL).

This sequence belongs to the NRAMP family.

It localises to the cell inner membrane. H(+)-stimulated, divalent metal cation uptake system. In Acidiphilium cryptum (strain JF-5), this protein is Divalent metal cation transporter MntH.